We begin with the raw amino-acid sequence, 228 residues long: Cytochrome c oxidase subunit 2 (228 aa).

Residues methionine 1–histidine 26 lie on the Mitochondrial intermembrane side of the membrane. The helical transmembrane segment at alanine 27 to asparagine 48 threads the bilayer. Over lysine 49 to glutamate 62 the chain is Mitochondrial matrix. A helical membrane pass occupies residues threonine 63–arginine 82. The Mitochondrial intermembrane segment spans residues leucine 83–serine 228. Residues histidine 161, cysteine 196, glutamate 198, cysteine 200, histidine 204, and methionine 207 each coordinate Cu cation. Glutamate 198 lines the Mg(2+) pocket.

It belongs to the cytochrome c oxidase subunit 2 family. In terms of assembly, component of the cytochrome c oxidase (complex IV, CIV), a multisubunit enzyme composed of a catalytic core of 3 subunits and several supernumerary subunits. The complex exists as a monomer or a dimer and forms supercomplexes (SCs) in the inner mitochondrial membrane with ubiquinol-cytochrome c oxidoreductase (cytochrome b-c1 complex, complex III, CIII). Requires Cu cation as cofactor.

The protein resides in the mitochondrion inner membrane. It catalyses the reaction 4 Fe(II)-[cytochrome c] + O2 + 8 H(+)(in) = 4 Fe(III)-[cytochrome c] + 2 H2O + 4 H(+)(out). In terms of biological role, component of the cytochrome c oxidase, the last enzyme in the mitochondrial electron transport chain which drives oxidative phosphorylation. The respiratory chain contains 3 multisubunit complexes succinate dehydrogenase (complex II, CII), ubiquinol-cytochrome c oxidoreductase (cytochrome b-c1 complex, complex III, CIII) and cytochrome c oxidase (complex IV, CIV), that cooperate to transfer electrons derived from NADH and succinate to molecular oxygen, creating an electrochemical gradient over the inner membrane that drives transmembrane transport and the ATP synthase. Cytochrome c oxidase is the component of the respiratory chain that catalyzes the reduction of oxygen to water. Electrons originating from reduced cytochrome c in the intermembrane space (IMS) are transferred via the dinuclear copper A center (CU(A)) of subunit 2 and heme A of subunit 1 to the active site in subunit 1, a binuclear center (BNC) formed by heme A3 and copper B (CU(B)). The BNC reduces molecular oxygen to 2 water molecules using 4 electrons from cytochrome c in the IMS and 4 protons from the mitochondrial matrix. The sequence is that of Cytochrome c oxidase subunit 2 (COII) from Artemia franciscana (Brine shrimp).